The sequence spans 638 residues: MDEILNTINSPRDLKKLSLPEMTQLANEIRQLLVKSVAKCGGHLASNLGVVELSLALHTVFDSPEDKIIWDVGHQAYVHKILTGRREQMSTLRQYGGISGFPKVEESEYDAFNTGHSSTSISAALGMALARDLQGQSNSVVAVIGDGALTAGMAFEALNHAGQEDSDLIVVLNDNEMSISKNVGAMSAYLNRLRTDPSYSRTKEEIESVLNRIPGIGPNLARAAGKFKDTVKYLMVPGIIFEELGFTYIGPVNGHDLAELKAVLSNIKKMKGPILLHTITQKGKGYEPAFQKPDIFHGVGPFDVDTGTQLKKSLKTYTEIFGDFMLNQAQRDNKLVAITAAMTSGTGLSEFSRNFPERFFDVGICEQHAVTLAAGMASSGLRPVVAVYSTFLQRAYDQIVHDVALQKLPVIFAIDRAGLVGEDGPTHHGAFDFSYLRHIPNLIIMAPADENELVDMLHSAFSMEGPVAIRYPRGVGEGVRIKSERQLLEPGQSRLIAEGQDLAIIAVGRGVSIARDVVDLLAGKGVNPLLVDARFVKPLDRRVIAGAAQKYHRLLTIEDNSLAGGFGSAIGEMLVEEGIDAELLHIALPDEFVEHGRVELLFEQLNMNPDSILESIAGKWPELFSAGSRWELLKFGQN.

Residues histidine 74 and 115–117 each bind thiamine diphosphate; that span reads GHS. Residue aspartate 146 coordinates Mg(2+). Thiamine diphosphate is bound by residues 147-148, asparagine 175, tyrosine 286, and glutamate 366; that span reads GA. Mg(2+) is bound at residue asparagine 175.

This sequence belongs to the transketolase family. DXPS subfamily. Homodimer. Requires Mg(2+) as cofactor. Thiamine diphosphate serves as cofactor.

The enzyme catalyses D-glyceraldehyde 3-phosphate + pyruvate + H(+) = 1-deoxy-D-xylulose 5-phosphate + CO2. Its pathway is metabolic intermediate biosynthesis; 1-deoxy-D-xylulose 5-phosphate biosynthesis; 1-deoxy-D-xylulose 5-phosphate from D-glyceraldehyde 3-phosphate and pyruvate: step 1/1. Functionally, catalyzes the acyloin condensation reaction between C atoms 2 and 3 of pyruvate and glyceraldehyde 3-phosphate to yield 1-deoxy-D-xylulose-5-phosphate (DXP). This Syntrophomonas wolfei subsp. wolfei (strain DSM 2245B / Goettingen) protein is 1-deoxy-D-xylulose-5-phosphate synthase.